The following is an 86-amino-acid chain: MKTLLLALAVVAFMCLDSVYPLNCFQCNRETWWKCSEAKRCRLGNKCYNLYNSDGKWTVKGCAQTCPTAGPDERVKCCYISECNRY.

The N-terminal stretch at 1–21 is a signal peptide; it reads MKTLLLALAVVAFMCLDSVYP. 5 disulfides stabilise this stretch: C24/C47, C27/C35, C41/C62, C66/C77, and C78/C83.

Belongs to the three-finger toxin family. Ancestral subfamily. Boigatoxin sub-subfamily. Monomer. Expressed by the venom gland.

It localises to the secreted. Its function is as follows. Probable neurotoxin. Is not toxic to mice and geckos. The sequence is that of Sulmotoxin 2 from Spilotes sulphureus (Amazon puffing snake).